We begin with the raw amino-acid sequence, 694 residues long: Elongation factor G (694 aa).

The tr-type G domain occupies 9–288 (SKIRNIGIMA…VIVKWLPSPK (280 aa)). GTP is bound by residues 18 to 25 (AHIDAGKT), 82 to 86 (DTPGH), and 136 to 139 (NKMD).

This sequence belongs to the TRAFAC class translation factor GTPase superfamily. Classic translation factor GTPase family. EF-G/EF-2 subfamily.

The protein localises to the cytoplasm. Catalyzes the GTP-dependent ribosomal translocation step during translation elongation. During this step, the ribosome changes from the pre-translocational (PRE) to the post-translocational (POST) state as the newly formed A-site-bound peptidyl-tRNA and P-site-bound deacylated tRNA move to the P and E sites, respectively. Catalyzes the coordinated movement of the two tRNA molecules, the mRNA and conformational changes in the ribosome. This Chlamydia caviae (strain ATCC VR-813 / DSM 19441 / 03DC25 / GPIC) (Chlamydophila caviae) protein is Elongation factor G.